Here is a 199-residue protein sequence, read N- to C-terminus: UPF0462 protein C4orf33 homolog (199 aa).

Belongs to the UPF0462 family.

This chain is UPF0462 protein C4orf33 homolog, found in Rattus norvegicus (Rat).